Here is a 304-residue protein sequence, read N- to C-terminus: Type II methyltransferase M.ScaI (304 aa).

Belongs to the N(4)/N(6)-methyltransferase family. N(4) subfamily.

The catalysed reaction is a 2'-deoxycytidine in DNA + S-adenosyl-L-methionine = an N(4)-methyl-2'-deoxycytidine in DNA + S-adenosyl-L-homocysteine + H(+). Functionally, a methylase that recognizes the double-stranded sequence 5'-AGTACT-3', methylates C-5 on both strands, and protects the DNA from cleavage by the ScaI endonuclease. The protein is Type II methyltransferase M.ScaI of Streptomyces caespitosus.